Reading from the N-terminus, the 137-residue chain is Small ribosomal subunit protein uS12 (137 aa).

Disordered regions lie at residues 1–21 (MPTINQLVRKPRKSKVEKSKS) and 33–57 (KVQTNVSSPQKRGVATRVGTMTPRK). D102 is modified (3-methylthioaspartic acid).

It belongs to the universal ribosomal protein uS12 family. Part of the 30S ribosomal subunit. Contacts proteins S8 and S17. May interact with IF1 in the 30S initiation complex.

Its function is as follows. With S4 and S5 plays an important role in translational accuracy. In terms of biological role, interacts with and stabilizes bases of the 16S rRNA that are involved in tRNA selection in the A site and with the mRNA backbone. Located at the interface of the 30S and 50S subunits, it traverses the body of the 30S subunit contacting proteins on the other side and probably holding the rRNA structure together. The combined cluster of proteins S8, S12 and S17 appears to hold together the shoulder and platform of the 30S subunit. This Streptococcus pneumoniae (strain ATCC 700669 / Spain 23F-1) protein is Small ribosomal subunit protein uS12.